The chain runs to 298 residues: MLKIGSHVSMSGKKMLLAASEEAVSYGATTFMIYTGAPQNTRRKPIEELNIEAGRKHMEQNGIEEIIVHAPYIINVGNTTKPETFQLGVDFLRMEIERTSALGVAKQIVLHPGAHVGAGADAGIQQIIKGLNEVLTPDQTVNIALETMAGKGTECGRSFEEIAKIIDGVKYNEKLSVCFDTCHTHDAGYDIVNDFDGVLNEFDKIVGIDRLQVLHINDSKNVRGAGKDRHENIGFGHIGYKALHHIVHHPQLTHVPKILETPYVGEDKKDKKPPYKLEIEMLKNGTFDEGLLEKIKAQ.

Zn(2+) contacts are provided by H69, H111, E146, D180, H183, H215, D228, H230, and E260.

This sequence belongs to the AP endonuclease 2 family. It depends on Zn(2+) as a cofactor.

The enzyme catalyses Endonucleolytic cleavage to 5'-phosphooligonucleotide end-products.. Its function is as follows. Endonuclease IV plays a role in DNA repair. It cleaves phosphodiester bonds at apurinic or apyrimidinic (AP) sites, generating a 3'-hydroxyl group and a 5'-terminal sugar phosphate. The chain is Probable endonuclease 4 from Bacillus cereus (strain 03BB102).